Here is a 186-residue protein sequence, read N- to C-terminus: MATEGTGVSGLAARYATALFELADENKALDQTAQDLALLKQLMAESADLRRVVRSPLLSRSDQARAMDAVLAQVDVSGLVRQFVGLVARNRRLFALSGMIDGFLAELARRRGEQTARVVAARPLSQEQLDALTDALRRALGSKVSVDLRVDPSLIGGMVVKVGSRMIDSSVRTKLTKLKLAMKGVG.

This sequence belongs to the ATPase delta chain family. F-type ATPases have 2 components, F(1) - the catalytic core - and F(0) - the membrane proton channel. F(1) has five subunits: alpha(3), beta(3), gamma(1), delta(1), epsilon(1). CF(0) has four main subunits: a(1), b(1), b'(1) and c(10-14). The alpha and beta chains form an alternating ring which encloses part of the gamma chain. F(1) is attached to F(0) by a central stalk formed by the gamma and epsilon chains, while a peripheral stalk is formed by the delta, b and b' chains.

It is found in the cell inner membrane. Functionally, f(1)F(0) ATP synthase produces ATP from ADP in the presence of a proton or sodium gradient. F-type ATPases consist of two structural domains, F(1) containing the extramembraneous catalytic core and F(0) containing the membrane proton channel, linked together by a central stalk and a peripheral stalk. During catalysis, ATP synthesis in the catalytic domain of F(1) is coupled via a rotary mechanism of the central stalk subunits to proton translocation. Its function is as follows. This protein is part of the stalk that links CF(0) to CF(1). It either transmits conformational changes from CF(0) to CF(1) or is implicated in proton conduction. In Rhodospirillum centenum (strain ATCC 51521 / SW), this protein is ATP synthase subunit delta.